The following is a 347-amino-acid chain: Methionine import ATP-binding protein MetN (347 aa).

Residues 2–247 (ITTTGLTKVY…PGSELASALF (246 aa)) form the ABC transporter domain. 38–45 (GQSGAGKS) provides a ligand contact to ATP.

Belongs to the ABC transporter superfamily. Methionine importer (TC 3.A.1.24) family. As to quaternary structure, the complex is composed of two ATP-binding proteins (MetN), two transmembrane proteins (MetI) and a solute-binding protein (MetQ).

It is found in the cell membrane. The catalysed reaction is L-methionine(out) + ATP + H2O = L-methionine(in) + ADP + phosphate + H(+). The enzyme catalyses D-methionine(out) + ATP + H2O = D-methionine(in) + ADP + phosphate + H(+). Part of the ABC transporter complex MetNIQ involved in methionine import. Responsible for energy coupling to the transport system. This chain is Methionine import ATP-binding protein MetN, found in Streptomyces avermitilis (strain ATCC 31267 / DSM 46492 / JCM 5070 / NBRC 14893 / NCIMB 12804 / NRRL 8165 / MA-4680).